We begin with the raw amino-acid sequence, 991 residues long: Pro-apoptotic serine protease NMA111 (991 aa).

The tract at residues 1 to 57 (MTVGKRKLSNGTVNEAKRLDDHVPVVAPSTNPDFENANGEDNEDIDDYSSEGEMSPQ) is disordered. Over residues 38–50 (NGEDNEDIDDYSS) the composition is skewed to acidic residues. Residues 86–269 (HVSNFDTESS…LPVYRPLRAL (184 aa)) are serine protease. Catalysis depends on charge relay system residues His-117, Asp-148, and Ser-231. PDZ domains lie at 296-374 (RRLG…QRNG) and 885-957 (PHHG…VSFD).

Belongs to the peptidase S1C family.

The protein localises to the nucleus. Its function is as follows. Nuclear serine protease which mediates apoptosis. The polypeptide is Pro-apoptotic serine protease NMA111 (NMA111) (Meyerozyma guilliermondii (strain ATCC 6260 / CBS 566 / DSM 6381 / JCM 1539 / NBRC 10279 / NRRL Y-324) (Yeast)).